Here is a 486-residue protein sequence, read N- to C-terminus: MNFQQSAIPPFSFLLSFTQGFLLGQLSVVLLIGAFIKFFIFGEAPPPPSRGLSHRASTHRRSNSIYTISTNEAGSRSLREKPSTSNVLRPVPSSSTNTRSILRKTYYGAIPTNPSKHGRHRVHHSSHQPESLDWFNVLIAQTIAQYRQTAYLLKDEPTSSILSSLTAALNNPEKKPSFIDKITVTDISLGEEFPIFSNCRIIAVDDPNSDGGRLQALMDVDLSDDNLSIGIETSLLLNYPKPGSAILPVALSISVVRFSGTLCISLVPASTPPLHTPSPSPAPQTADGARTQSQPENNSSNPNQQSADASGAPPKTSPKSNVAFSFLPDYRLDLSVRSLIGSRSRLQDVPKVAQLVEARVHAWFEERVVEPRVQVVGLPDLWPRMGRTGVRTGEDSETGSNAASRSAISADLGSSLRDDLDQGPDGLRFRGPLGARPQFDSVSRSSSFNVETGGFHGHPMTREDSRGAISDDFHMPGSLPDGAVGN.

Over 1 to 20 (MNFQQSAIPPFSFLLSFTQG) the chain is Lumenal. The helical transmembrane segment at 21–41 (FLLGQLSVVLLIGAFIKFFIF) threads the bilayer. The Cytoplasmic segment spans residues 42–486 (GEAPPPPSRG…GSLPDGAVGN (445 aa)). Disordered stretches follow at residues 70 to 96 (TNEA…SSST), 271 to 320 (TPPL…SPKS), and 387 to 486 (RTGV…AVGN). Over residues 83-96 (STSNVLRPVPSSST) the composition is skewed to polar residues. The 252-residue stretch at 128–379 (QPESLDWFNV…EPRVQVVGLP (252 aa)) folds into the SMP-LTD domain. The segment covering 271-282 (TPPLHTPSPSPA) has biased composition (pro residues). Positions 292–306 (QSQPENNSSNPNQQS) are enriched in low complexity. Composition is skewed to polar residues over residues 398–407 (TGSNAASRSA) and 440–450 (DSVSRSSSFNV). Residues 460-474 (MTREDSRGAISDDFH) show a composition bias toward basic and acidic residues.

The protein belongs to the MMM1 family. As to quaternary structure, homodimer. Component of the ER-mitochondria encounter structure (ERMES) or MDM complex, composed of mmm1, mdm10, mdm12 and mdm34. A mmm1 homodimer associates with one molecule of mdm12 on each side in a pairwise head-to-tail manner, and the SMP-LTD domains of mmm1 and mdm12 generate a continuous hydrophobic tunnel for phospholipid trafficking.

The protein localises to the endoplasmic reticulum membrane. Its function is as follows. Component of the ERMES/MDM complex, which serves as a molecular tether to connect the endoplasmic reticulum (ER) and mitochondria. Components of this complex are involved in the control of mitochondrial shape and protein biogenesis, and function in nonvesicular lipid trafficking between the ER and mitochondria. The mdm12-mmm1 subcomplex functions in the major beta-barrel assembly pathway that is responsible for biogenesis of all outer membrane beta-barrel proteins, and acts in a late step after the SAM complex. The mdm10-mdm12-mmm1 subcomplex further acts in the TOM40-specific pathway after the action of the mdm12-mmm1 complex. Essential for establishing and maintaining the structure of mitochondria and maintenance of mtDNA nucleoids. The protein is Maintenance of mitochondrial morphology protein 1 of Aspergillus terreus (strain NIH 2624 / FGSC A1156).